An 855-amino-acid polypeptide reads, in one-letter code: DNA mismatch repair protein MutS (855 aa).

616–623 serves as a coordination point for ATP; the sequence is GPNMGGKS.

The protein belongs to the DNA mismatch repair MutS family.

In terms of biological role, this protein is involved in the repair of mismatches in DNA. It is possible that it carries out the mismatch recognition step. This protein has a weak ATPase activity. This Salmonella gallinarum (strain 287/91 / NCTC 13346) protein is DNA mismatch repair protein MutS.